A 425-amino-acid polypeptide reads, in one-letter code: tRNA (guanine-N(7)-)-methyltransferase non-catalytic subunit wuho (425 aa).

Positions Ala67–Val102 are disordered. Over residues Gly88–Val102 the composition is skewed to low complexity. WD repeat units lie at residues Val97 to Leu138, Pro142 to Arg181, Gly185 to Ser224, Gly228 to Gln266, and Ala325 to Ser365.

Belongs to the WD repeat TRM82 family. As to quaternary structure, forms a heterodimer with the catalytic subunit Mettl1. Interacts with mei-P26 and weakly interacts with bgcn; required for the function or formation of the mei-P26-bgcn-bam-sxl complex. Interacts with nanos; may be involved in mei-P26-dependent derepression of the BMP signaling pathway. Interacts with Myc; the interaction may be mediated by mei-P26 and may be involved in the regulation of ribosome biogenesis. In testis, it is present at high level in hub cells, a niche for germline stem cells of testis. Ubiquitously expressed in all testicular cells throughout spermatogenesis. Ubiquitously expressed in all germline and somatic cells of the ovary.

It is found in the nucleus. It localises to the cytoplasm. The protein operates within tRNA modification; N(7)-methylguanine-tRNA biosynthesis. Functionally, required for the Mettl1-dependent formation of N(7)-methylguanine at position 46 (m7G46) in tRNA. In the Mettl1-wuho methyltransferase complex, it is required to stabilize and induce conformational changes of the catalytic subunit. Required for binding of nanos mRNA and repression of translation by the mei-P26-bgcn-bam-sxl complex. May cooperate with mei-P26 and nanos to derepress the BMP signaling pathway. May cooperate with mei-P26 to suppress expression of a subset of microRNAs. May cooperate with mei-P26 to regulate bam expression levels in germline cells during gametogenesis. Required to promote mitosis to meiosis transition during gametogenesis. May regulate germline cell division in part by regulating ribosome biogenesis. In Drosophila yakuba (Fruit fly), this protein is tRNA (guanine-N(7)-)-methyltransferase non-catalytic subunit wuho.